The following is a 924-amino-acid chain: DNA repair and recombination protein RDH54 (924 aa).

Residues 1–10 (MQIPKYENKP) are compositionally biased toward basic and acidic residues. 2 disordered regions span residues 1 to 21 (MQIP…GSNK) and 155 to 183 (EALS…NDGG). Residues 168–178 (TTSTTETVPST) show a composition bias toward low complexity. A Helicase ATP-binding domain is found at 299-487 (LENDSDISGC…FTIIDFINPG (189 aa)). 346–353 (IPLTGLCK) lines the ATP pocket. The DEGH box signature appears at 472–475 (NDLN). K615 is covalently cross-linked (Glycyl lysine isopeptide (Lys-Gly) (interchain with G-Cter in ubiquitin)). In terms of domain architecture, Helicase C-terminal spans 631 to 790 (KLRVLMTLLE…DSEMRNKESS (160 aa)).

Belongs to the SNF2/RAD54 helicase family. As to quaternary structure, interacts with RAD51 and DMC1.

The protein localises to the nucleus. The enzyme catalyses ATP + H2O = ADP + phosphate + H(+). Its function is as follows. Involved in the recombinational repair of double-strand breaks (DSB) in DNA during mitosis and meiosis. Has DNA dependent ATPase activity. Promotes D-loop (displacement loop) formation with RAD51 recombinase. Modifies the topology of double-stranded DNA during the D-loop reaction to facilitate the invasion of the homologous duplex molecule by the initiating single-stranded DNA substrate. Required for adaptation from G2/M checkpoint arrest induced by a double strand break, by participating in monitoring the extent of single-stranded DNA produced by resection of DNA ends. This role is distinct from its roles in recombination. Promotes colocalization of RAD51 and DMC1 during meiotic recombination. Involved in crossover interference. The sequence is that of DNA repair and recombination protein RDH54 (RDH54) from Saccharomyces cerevisiae (strain YJM789) (Baker's yeast).